Consider the following 246-residue polypeptide: Receptor-transporting protein 4 (246 aa).

Topologically, residues 1–224 (MVVDFWTWEQ…EKLGPSRDPD (224 aa)) are cytoplasmic. A 3CxxC-type zinc finger spans residues 48-159 (RAFGWFRCSS…DTANCEACTL (112 aa)). The helical transmembrane segment at 225–245 (PLNICVFILLLVFIVVKCFTS) threads the bilayer.

Belongs to the TMEM7 family. Interacts with TASR16. Interacts with OPRD1 and OPRM1; the interaction promotes cell surface localization of the OPDR1-OPRM1 heterodimer. As to quaternary structure, (Microbial infection) Interacts with influenza A virus protein NS1; this interaction sequesters NS1 from interacting with RIG-I/DDX58 to restore antiviral signaling. Expressed in circumvallate papillae and testis.

The protein resides in the membrane. Its subcellular location is the cytoplasm. Functionally, chaperone protein that facilitates the trafficking and functional cell surface expression of some G-protein coupled receptors (GPCRs). Promotes functional expression of the bitter taste receptor TAS2R16. Also promotes functional expression of the opioid receptor heterodimer OPRD1-OPRM1. In addition, acts as a potent IFN-inducible suppressor of pathogens including lyssavirus rabies, influenza A or yellow fever virus. Mechanistically, associates with the viral replicase, binds viral RNA, and thereby suppresses viral genome amplification that replicates at the endoplasmic reticulum. In addition, restores antiviral signaling by interacting with and sequestering influenza A virus protein NS1. The polypeptide is Receptor-transporting protein 4 (RTP4) (Homo sapiens (Human)).